Consider the following 291-residue polypeptide: MNDNNNNNEFKPENLESLNNTEFHISIKDITGKEFNGPFELFYSLIKERKMDILNINLVEVIQLYVDYINNYLTKLKIDDLTEYLLMATYLLEQKSKRILPSMDTEEKISKDIERDKYIQRLLVYKQYQEIVPKLMEKLERRSRMFEKPTQSGEDKESLLKEFQDNSYVPAMDLDVILKAMQKVYLKLVTTKKTKSPKDNVKLIDVSEISIDDVEKEIREFLEPFPHLYKISFMDYFKNIPDEKFTKRYFVVAFVAILVLVRNGHIQLEQNSSDENIFIVKIDKEVESNEY.

It belongs to the ScpA family. Component of a cohesin-like complex composed of ScpA, ScpB and the Smc homodimer, in which ScpA and ScpB bind to the head domain of Smc. The presence of the three proteins is required for the association of the complex with DNA.

The protein localises to the cytoplasm. Functionally, participates in chromosomal partition during cell division. May act via the formation of a condensin-like complex containing Smc and ScpB that pull DNA away from mid-cell into both cell halves. The chain is Segregation and condensation protein A from Malacoplasma penetrans (strain HF-2) (Mycoplasma penetrans).